The following is a 690-amino-acid chain: Elongation factor G (690 aa).

The tr-type G domain maps to 8 to 283; sequence ERYRNFGIMA…AVVDFMPSPL (276 aa). Residues 17-24, 81-85, and 135-138 contribute to the GTP site; these read AHIDAGKT, DTPGH, and NKLD.

It belongs to the TRAFAC class translation factor GTPase superfamily. Classic translation factor GTPase family. EF-G/EF-2 subfamily.

The protein resides in the cytoplasm. Its function is as follows. Catalyzes the GTP-dependent ribosomal translocation step during translation elongation. During this step, the ribosome changes from the pre-translocational (PRE) to the post-translocational (POST) state as the newly formed A-site-bound peptidyl-tRNA and P-site-bound deacylated tRNA move to the P and E sites, respectively. Catalyzes the coordinated movement of the two tRNA molecules, the mRNA and conformational changes in the ribosome. This Novosphingobium aromaticivorans (strain ATCC 700278 / DSM 12444 / CCUG 56034 / CIP 105152 / NBRC 16084 / F199) protein is Elongation factor G.